The sequence spans 243 residues: Probable transcriptional regulatory protein Tbd_2215 (243 aa).

The protein belongs to the TACO1 family.

It is found in the cytoplasm. In Thiobacillus denitrificans (strain ATCC 25259 / T1), this protein is Probable transcriptional regulatory protein Tbd_2215.